The sequence spans 234 residues: 1-(5-phosphoribosyl)-5-[(5-phosphoribosylamino)methylideneamino] imidazole-4-carboxamide isomerase (234 aa).

Asp9 functions as the Proton acceptor in the catalytic mechanism. Asp131 acts as the Proton donor in catalysis.

It belongs to the HisA/HisF family.

Its subcellular location is the cytoplasm. The catalysed reaction is 1-(5-phospho-beta-D-ribosyl)-5-[(5-phospho-beta-D-ribosylamino)methylideneamino]imidazole-4-carboxamide = 5-[(5-phospho-1-deoxy-D-ribulos-1-ylimino)methylamino]-1-(5-phospho-beta-D-ribosyl)imidazole-4-carboxamide. Its pathway is amino-acid biosynthesis; L-histidine biosynthesis; L-histidine from 5-phospho-alpha-D-ribose 1-diphosphate: step 4/9. This is 1-(5-phosphoribosyl)-5-[(5-phosphoribosylamino)methylideneamino] imidazole-4-carboxamide isomerase from Staphylococcus saprophyticus subsp. saprophyticus (strain ATCC 15305 / DSM 20229 / NCIMB 8711 / NCTC 7292 / S-41).